A 144-amino-acid polypeptide reads, in one-letter code: 3-dehydroquinate dehydratase (144 aa).

Y24 functions as the Proton acceptor in the catalytic mechanism. Positions 76, 82, and 89 each coordinate substrate. H102 (proton donor) is an active-site residue. Residues 103–104 (LS) and R113 contribute to the substrate site.

It belongs to the type-II 3-dehydroquinase family. As to quaternary structure, homododecamer.

It carries out the reaction 3-dehydroquinate = 3-dehydroshikimate + H2O. Its pathway is metabolic intermediate biosynthesis; chorismate biosynthesis; chorismate from D-erythrose 4-phosphate and phosphoenolpyruvate: step 3/7. Its function is as follows. Catalyzes a trans-dehydration via an enolate intermediate. This chain is 3-dehydroquinate dehydratase, found in Bordetella bronchiseptica (strain ATCC BAA-588 / NCTC 13252 / RB50) (Alcaligenes bronchisepticus).